The following is a 495-amino-acid chain: Bile acid-sensitive ion channel (495 aa).

Positions M1 to S30 are binds the plasma membrane and stabilizes the channel in the closed state. The Cytoplasmic portion of the chain corresponds to M1–R61. The helical transmembrane segment at K62–S82 threads the bilayer. The Extracellular portion of the chain corresponds to R83–T459. 6 disulfides stabilise this stretch: C112–C207, C185–C192, C298–C377, C315–C373, C328–C350, and C330–C342. N147 and N163 each carry an N-linked (GlcNAc...) asparagine glycan. A glycan (N-linked (GlcNAc...) asparagine) is linked at N306. N-linked (GlcNAc...) asparagine glycans are attached at residues N370, N405, and N421. Positions G454–S456 match the GAS motif; ion selectivity filter motif. The chain crosses the membrane as a helical span at residues I460–L480. Topologically, residues K481–V495 are cytoplasmic.

It belongs to the amiloride-sensitive sodium channel (TC 1.A.6) family. ASIC5 subfamily. In terms of assembly, forms homotrimeric channels. In terms of tissue distribution, expressed by cholangiocytes (at protein level). Detected in brain, liver, duodenum, jejunum, ileum and testis.

Its subcellular location is the apical cell membrane. It is found in the cell membrane. It catalyses the reaction Na(+)(in) = Na(+)(out). The catalysed reaction is Li(+)(in) = Li(+)(out). The enzyme catalyses K(+)(in) = K(+)(out). It carries out the reaction H(+)(in) = H(+)(out). Inhibited by the diuretic drug amiloride. Inhibited by diminazene. Inhibited by extracellular Ca(2+). Its function is as follows. Forms bile acid-gated sodium channels and may play a role in bile acid-dependent absorption and secretion by epithelial cells of the bile ducts. Displays high selectivity for sodium ions but can also permit the permeation of other cations. The gating could be indirect and the consequence of alterations of the membrane environment of the channel by bile acids. As a sodium channel of type II unipolar brush cells of the vestibulocerebellum, controlling the electrical activity of these cells, could play a role in motor coordination and balance. The chain is Bile acid-sensitive ion channel from Rattus norvegicus (Rat).